Reading from the N-terminus, the 384-residue chain is Alanine racemase (384 aa).

Lysine 42 functions as the Proton acceptor; specific for D-alanine in the catalytic mechanism. Lysine 42 carries the N6-(pyridoxal phosphate)lysine modification. Position 140 (arginine 140) interacts with substrate. Tyrosine 271 (proton acceptor; specific for L-alanine) is an active-site residue. Methionine 319 is a binding site for substrate.

It belongs to the alanine racemase family. In terms of assembly, homodimer. The cofactor is pyridoxal 5'-phosphate.

The catalysed reaction is L-alanine = D-alanine. Its pathway is amino-acid biosynthesis; D-alanine biosynthesis; D-alanine from L-alanine: step 1/1. Catalyzes the interconversion of L-alanine and D-alanine. In Mycobacterium tuberculosis (strain CDC 1551 / Oshkosh), this protein is Alanine racemase (alr).